A 45-amino-acid chain; its full sequence is uncharacterized protein (45 aa).

Residues 15–37 form a helical membrane-spanning segment; that stretch reads EVVGTLMAVLITFALVAVVFNFI.

It localises to the membrane. This is an uncharacterized protein from Archaeoglobus fulgidus (strain ATCC 49558 / DSM 4304 / JCM 9628 / NBRC 100126 / VC-16).